A 215-amino-acid polypeptide reads, in one-letter code: Nitrate/nitrite response regulator protein NarP (215 aa).

The region spanning 8 to 124 (QVMIVDDHPL…VLLEAIRAGA (117 aa)) is the Response regulatory domain. Asp59 bears the 4-aspartylphosphate mark. An HTH luxR-type domain is found at 147–212 (EEDPFSVLTE…AATILFLQQR (66 aa)). Positions 171–190 (NKQIASVLNISEQTVKVHIR) form a DNA-binding region, H-T-H motif.

This protein activates the expression of the nitrate reductase (narGHJI) and formate dehydrogenase-N (fdnGHI) operons and represses the transcription of the fumarate reductase (frdABCD) operon in response to a nitrate/nitrite induction signal transmitted by either the NarX or NarQ proteins. The polypeptide is Nitrate/nitrite response regulator protein NarP (narP) (Escherichia coli (strain K12)).